A 375-amino-acid chain; its full sequence is Chaperone protein DnaJ (375 aa).

The 66-residue stretch at 5-70 (DYYEVLGVER…SKRAAFDQYG (66 aa)) folds into the J domain. Residues 134 to 212 (GTTVSIRVPT…CHGEGRVEEY (79 aa)) form a CR-type zinc finger. Positions 147, 150, 164, 167, 186, 189, 200, and 203 each coordinate Zn(2+). CXXCXGXG motif repeat units lie at residues 147-154 (CQPCDGSG), 164-171 (CPTCGGIG), 186-193 (CPRCHGQG), and 200-207 (CTSCHGEG).

Belongs to the DnaJ family. As to quaternary structure, homodimer. Zn(2+) serves as cofactor.

It localises to the cytoplasm. In terms of biological role, participates actively in the response to hyperosmotic and heat shock by preventing the aggregation of stress-denatured proteins and by disaggregating proteins, also in an autonomous, DnaK-independent fashion. Unfolded proteins bind initially to DnaJ; upon interaction with the DnaJ-bound protein, DnaK hydrolyzes its bound ATP, resulting in the formation of a stable complex. GrpE releases ADP from DnaK; ATP binding to DnaK triggers the release of the substrate protein, thus completing the reaction cycle. Several rounds of ATP-dependent interactions between DnaJ, DnaK and GrpE are required for fully efficient folding. Also involved, together with DnaK and GrpE, in the DNA replication of plasmids through activation of initiation proteins. This Pseudomonas putida (strain ATCC 47054 / DSM 6125 / CFBP 8728 / NCIMB 11950 / KT2440) protein is Chaperone protein DnaJ.